Consider the following 425-residue polypeptide: Enolase (425 aa).

Gln162 lines the (2R)-2-phosphoglycerate pocket. Catalysis depends on Glu204, which acts as the Proton donor. Mg(2+) contacts are provided by Asp241, Glu284, and Asp311. Residues Lys336, Arg365, Ser366, and Lys387 each coordinate (2R)-2-phosphoglycerate. Lys336 acts as the Proton acceptor in catalysis.

Belongs to the enolase family. It depends on Mg(2+) as a cofactor.

The protein resides in the cytoplasm. It is found in the secreted. It localises to the cell surface. The enzyme catalyses (2R)-2-phosphoglycerate = phosphoenolpyruvate + H2O. Its pathway is carbohydrate degradation; glycolysis; pyruvate from D-glyceraldehyde 3-phosphate: step 4/5. Its function is as follows. Catalyzes the reversible conversion of 2-phosphoglycerate (2-PG) into phosphoenolpyruvate (PEP). It is essential for the degradation of carbohydrates via glycolysis. This Brucella ovis (strain ATCC 25840 / 63/290 / NCTC 10512) protein is Enolase.